Consider the following 272-residue polypeptide: HMP-PP phosphatase (272 aa).

Catalysis depends on D8, which acts as the Nucleophile. D8, D10, and D212 together coordinate Mg(2+).

The protein belongs to the HAD-like hydrolase superfamily. Cof family. Mg(2+) is required as a cofactor.

The catalysed reaction is 4-amino-2-methyl-5-(diphosphooxymethyl)pyrimidine + H2O = 4-amino-2-methyl-5-(phosphooxymethyl)pyrimidine + phosphate + H(+). Functionally, catalyzes the hydrolysis of 4-amino-2-methyl-5-hydroxymethylpyrimidine pyrophosphate (HMP-PP) to 4-amino-2-methyl-5-hydroxymethylpyrimidine phosphate (HMP-P). The chain is HMP-PP phosphatase from Escherichia fergusonii (strain ATCC 35469 / DSM 13698 / CCUG 18766 / IAM 14443 / JCM 21226 / LMG 7866 / NBRC 102419 / NCTC 12128 / CDC 0568-73).